The primary structure comprises 61 residues: Small ribosomal subunit protein uS14 (61 aa).

Residues Cys-24, Cys-27, Cys-40, and Cys-43 each coordinate Zn(2+).

This sequence belongs to the universal ribosomal protein uS14 family. Zinc-binding uS14 subfamily. In terms of assembly, part of the 30S ribosomal subunit. Contacts proteins S3 and S10. Zn(2+) is required as a cofactor.

Functionally, binds 16S rRNA, required for the assembly of 30S particles and may also be responsible for determining the conformation of the 16S rRNA at the A site. The sequence is that of Small ribosomal subunit protein uS14 from Clostridium perfringens (strain ATCC 13124 / DSM 756 / JCM 1290 / NCIMB 6125 / NCTC 8237 / Type A).